The primary structure comprises 445 residues: tRNA-2-methylthio-N(6)-dimethylallyladenosine synthase (445 aa).

An MTTase N-terminal domain is found at 2-122 (KKAFVKSYGC…LPDLLARSRE (121 aa)). [4Fe-4S] cluster-binding residues include Cys-11, Cys-47, Cys-85, Cys-157, Cys-161, and Cys-164. A Radical SAM core domain is found at 143–378 (RTLGASAFLT…LDSQRHAYQR (236 aa)). In terms of domain architecture, TRAM spans 378 to 440 (RAAAGRVFDV…SNSLFGELVS (63 aa)).

This sequence belongs to the methylthiotransferase family. MiaB subfamily. In terms of assembly, monomer. Requires [4Fe-4S] cluster as cofactor.

It is found in the cytoplasm. The enzyme catalyses N(6)-dimethylallyladenosine(37) in tRNA + (sulfur carrier)-SH + AH2 + 2 S-adenosyl-L-methionine = 2-methylsulfanyl-N(6)-dimethylallyladenosine(37) in tRNA + (sulfur carrier)-H + 5'-deoxyadenosine + L-methionine + A + S-adenosyl-L-homocysteine + 2 H(+). Catalyzes the methylthiolation of N6-(dimethylallyl)adenosine (i(6)A), leading to the formation of 2-methylthio-N6-(dimethylallyl)adenosine (ms(2)i(6)A) at position 37 in tRNAs that read codons beginning with uridine. The polypeptide is tRNA-2-methylthio-N(6)-dimethylallyladenosine synthase (Methylobacterium radiotolerans (strain ATCC 27329 / DSM 1819 / JCM 2831 / NBRC 15690 / NCIMB 10815 / 0-1)).